Consider the following 353-residue polypeptide: Small ribosomal subunit biogenesis GTPase RsgA (353 aa).

Over residues 1-17 (MSKNKLSKGQQRRVNAN) the composition is skewed to polar residues. Residues 1 to 25 (MSKNKLSKGQQRRVNANHQRRLKTT) form a disordered region. A CP-type G domain is found at 104 to 274 (ASVLTRPDFY…VIDSPGVREF (171 aa)). Residues 160–163 (NKID) and 214–222 (GQSGVGKSS) contribute to the GTP site. 4 residues coordinate Zn(2+): Cys-298, Cys-303, His-305, and Cys-311.

Belongs to the TRAFAC class YlqF/YawG GTPase family. RsgA subfamily. Monomer. Associates with 30S ribosomal subunit, binds 16S rRNA. Zn(2+) is required as a cofactor.

Its subcellular location is the cytoplasm. One of several proteins that assist in the late maturation steps of the functional core of the 30S ribosomal subunit. Helps release RbfA from mature subunits. May play a role in the assembly of ribosomal proteins into the subunit. Circularly permuted GTPase that catalyzes slow GTP hydrolysis, GTPase activity is stimulated by the 30S ribosomal subunit. This chain is Small ribosomal subunit biogenesis GTPase RsgA, found in Klebsiella pneumoniae (strain 342).